A 201-amino-acid polypeptide reads, in one-letter code: Holliday junction branch migration complex subunit RuvA (201 aa).

Positions 1-64 (MYEYIRGQFQ…EDFIGLYGFT (64 aa)) are domain I. The domain II stretch occupies residues 65-143 (TREELEMFKL…PDELTSEEGE (79 aa)). The tract at residues 144–152 (LIEGINDNS) is flexible linker. Residues 153–201 (DYSFNINETLSALMALGYTEKEAQKALEKVDKTLSIENMIKESLKLLMR) are domain III.

The protein belongs to the RuvA family. In terms of assembly, homotetramer. Forms an RuvA(8)-RuvB(12)-Holliday junction (HJ) complex. HJ DNA is sandwiched between 2 RuvA tetramers; dsDNA enters through RuvA and exits via RuvB. An RuvB hexamer assembles on each DNA strand where it exits the tetramer. Each RuvB hexamer is contacted by two RuvA subunits (via domain III) on 2 adjacent RuvB subunits; this complex drives branch migration. In the full resolvosome a probable DNA-RuvA(4)-RuvB(12)-RuvC(2) complex forms which resolves the HJ.

Its subcellular location is the cytoplasm. In terms of biological role, the RuvA-RuvB-RuvC complex processes Holliday junction (HJ) DNA during genetic recombination and DNA repair, while the RuvA-RuvB complex plays an important role in the rescue of blocked DNA replication forks via replication fork reversal (RFR). RuvA specifically binds to HJ cruciform DNA, conferring on it an open structure. The RuvB hexamer acts as an ATP-dependent pump, pulling dsDNA into and through the RuvAB complex. HJ branch migration allows RuvC to scan DNA until it finds its consensus sequence, where it cleaves and resolves the cruciform DNA. This is Holliday junction branch migration complex subunit RuvA from Clostridium perfringens (strain ATCC 13124 / DSM 756 / JCM 1290 / NCIMB 6125 / NCTC 8237 / Type A).